Consider the following 255-residue polypeptide: 20 kDa chaperonin, chloroplastic (255 aa).

The N-terminal 53 residues, 1 to 53 (MAATHLTSTSSLTINTLPSFEGLRSASGISKINVSVAYPSFTSRSFRGLVVRA), are a transit peptide targeting the chloroplast. 2 cpn-10 domain regions span residues 54–156 (ASIT…ILET) and 157–255 (DDVK…AVLS).

The protein belongs to the GroES chaperonin family. Forms stable complexes with CPN60 in the presence of ATP.

It localises to the plastid. Its subcellular location is the chloroplast. In terms of biological role, seems to function only as a co-chaperone, along with cpn60, and in certain cases is essential for the discharge of biologically active proteins from cpn60. The chain is 20 kDa chaperonin, chloroplastic (CPN21) from Spinacia oleracea (Spinach).